Consider the following 426-residue polypeptide: F-box protein At2g15640 (426 aa).

Residues 1–48 (MNPSTITNDLTVEILSRLPAKSVARFHCVSKQWGSIFGSPYFKELFLT) form the F-box domain.

The sequence is that of F-box protein At2g15640 from Arabidopsis thaliana (Mouse-ear cress).